Reading from the N-terminus, the 202-residue chain is FMN-dependent NADH:quinone oxidoreductase (202 aa).

FMN-binding positions include S9, 15–17 (SAS), 95–98 (MYNF), and 139–142 (TSGG).

It belongs to the azoreductase type 1 family. In terms of assembly, homodimer. Requires FMN as cofactor.

The enzyme catalyses 2 a quinone + NADH + H(+) = 2 a 1,4-benzosemiquinone + NAD(+). The catalysed reaction is N,N-dimethyl-1,4-phenylenediamine + anthranilate + 2 NAD(+) = 2-(4-dimethylaminophenyl)diazenylbenzoate + 2 NADH + 2 H(+). Its function is as follows. Quinone reductase that provides resistance to thiol-specific stress caused by electrophilic quinones. In terms of biological role, also exhibits azoreductase activity. Catalyzes the reductive cleavage of the azo bond in aromatic azo compounds to the corresponding amines. The sequence is that of FMN-dependent NADH:quinone oxidoreductase from Pseudomonas savastanoi pv. phaseolicola (strain 1448A / Race 6) (Pseudomonas syringae pv. phaseolicola (strain 1448A / Race 6)).